We begin with the raw amino-acid sequence, 210 residues long: Na(+)-translocating NADH-quinone reductase subunit D (210 aa).

5 helical membrane passes run 42–62, 72–92, 103–123, 131–151, and 178–198; these read FVMTLAVTFVTALSNFSVSLI, IIVQMAIIASLVIVVDQVLKA, VFVGLIITNCIVMGRAEAFAM, LIDGIGNGLGYGFVLITVGFF, and NGLMLLAPSAFFLIGFLIWVI.

The protein belongs to the NqrDE/RnfAE family. In terms of assembly, composed of six subunits; NqrA, NqrB, NqrC, NqrD, NqrE and NqrF.

The protein localises to the cell inner membrane. It carries out the reaction a ubiquinone + n Na(+)(in) + NADH + H(+) = a ubiquinol + n Na(+)(out) + NAD(+). Its activity is regulated as follows. This reaction is tightly coupled to the Na(+) pumping activity and specifically requires Na(+) for activity. Inhibited by korormicin and 2-N-heptyl-4-hydroxyquinoline N-oxide (HQNO). In terms of biological role, NQR complex catalyzes the reduction of ubiquinone-1 to ubiquinol by two successive reactions, coupled with the transport of Na(+) ions from the cytoplasm to the periplasm. NqrA to NqrE are probably involved in the second step, the conversion of ubisemiquinone to ubiquinol. This is Na(+)-translocating NADH-quinone reductase subunit D from Vibrio alginolyticus.